We begin with the raw amino-acid sequence, 291 residues long: ATP synthase gamma chain (291 aa).

This sequence belongs to the ATPase gamma chain family. In terms of assembly, F-type ATPases have 2 components, CF(1) - the catalytic core - and CF(0) - the membrane proton channel. CF(1) has five subunits: alpha(3), beta(3), gamma(1), delta(1), epsilon(1). CF(0) has three main subunits: a, b and c.

It is found in the cell inner membrane. Produces ATP from ADP in the presence of a proton gradient across the membrane. The gamma chain is believed to be important in regulating ATPase activity and the flow of protons through the CF(0) complex. The chain is ATP synthase gamma chain from Roseobacter denitrificans (strain ATCC 33942 / OCh 114) (Erythrobacter sp. (strain OCh 114)).